A 233-amino-acid chain; its full sequence is Outer membrane protein MIP (233 aa).

The first 20 residues, Met-1–Ala-20, serve as a signal peptide directing secretion. The PPIase FKBP-type domain occupies Ser-144–Ala-233.

It belongs to the FKBP-type PPIase family.

The protein resides in the cell outer membrane. It carries out the reaction [protein]-peptidylproline (omega=180) = [protein]-peptidylproline (omega=0). Strongly inhibited by FK506 but is completely resistant to cyclosporin A. Essential virulence factor associated with macrophage infectivity. Exhibits PPIase activity. The sequence is that of Outer membrane protein MIP (mip) from Legionella longbeachae.